We begin with the raw amino-acid sequence, 139 residues long: Transcription antitermination protein NusB (139 aa).

Belongs to the NusB family.

Functionally, involved in transcription antitermination. Required for transcription of ribosomal RNA (rRNA) genes. Binds specifically to the boxA antiterminator sequence of the ribosomal RNA (rrn) operons. This is Transcription antitermination protein NusB from Escherichia fergusonii (strain ATCC 35469 / DSM 13698 / CCUG 18766 / IAM 14443 / JCM 21226 / LMG 7866 / NBRC 102419 / NCTC 12128 / CDC 0568-73).